Here is a 157-residue protein sequence, read N- to C-terminus: Myosin regulatory light chain, striated adductor muscle (157 aa).

EF-hand domains lie at Lys16–Ala51 and Asp85–Asn120. 4 residues coordinate Ca(2+): Asp29, Asp31, Asp33, and Asp40.

In terms of biological role, in molluscan muscle, calcium regulation is associated with myosin rather than with actin. Muscle myosin contains two types of light chains: the catalytic light chain, essential for ATPase activity, and the regulatory light chain, a calcium-binding protein responsible for Ca(2+) dependent binding and Ca(2+) dependent Mg-ATPase activity. The chain is Myosin regulatory light chain, striated adductor muscle from Argopecten irradians (Bay scallop).